Consider the following 319-residue polypeptide: Plasmodesmata-located protein 4 (319 aa).

An N-terminal signal peptide occupies residues 1–26 (MVVHLISLLTQTLALIILSLPSIINT). At 27-288 (SQLDYDTLVF…EGSKVNTGKS (262 aa)) the chain is on the extracellular side. Disulfide bonds link Cys39–Cys127, Cys103–Cys112, Cys115–Cys140, Cys177–Cys247, Cys223–Cys232, and Cys235–Cys260. 2 consecutive Gnk2-homologous domains span residues 45–149 (NILQ…FERI) and 170–269 (HGLI…YHPH). A helical transmembrane segment spans residues 289-309 (LAIVVGGVAALVFVAIFFMFL). Residues 289-309 (LAIVVGGVAALVFVAIFFMFL) are necessary and sufficient for plasmodesmal targeting. Residues 310–319 (KSLRKKGDDC) lie on the Cytoplasmic side of the membrane.

It belongs to the cysteine-rich repeat secretory protein family. Plasmodesmata-located proteins (PDLD) subfamily. As to quaternary structure, (Microbial infection) Interacts with Grapevine fanleaf virus (GFLV) 2B-MP. Highly expressed in seeds and roots.

Its subcellular location is the cell membrane. The protein resides in the cell junction. It localises to the plasmodesma. In terms of biological role, modulates cell-to-cell trafficking. The protein is Plasmodesmata-located protein 4 of Arabidopsis thaliana (Mouse-ear cress).